The primary structure comprises 78 residues: Chassatide C4 (78 aa).

Positions M1–S23 are cleaved as a signal peptide. Positions I24–N42 are cleaved as a propeptide — removed in mature form. Residues G43 to N71 constitute a cross-link (cyclopeptide (Gly-Asn)). 3 cysteine pairs are disulfide-bonded: C46–C60, C50–C62, and C55–C68. The propeptide at G72 to I78 is removed in mature form.

Post-translationally, this is a cyclic peptide.

Its function is as follows. Probably participates in a plant defense mechanism. In Chassalia chartacea (Chassalia curviflora), this protein is Chassatide C4.